A 401-amino-acid polypeptide reads, in one-letter code: Phosphoglycerate kinase (401 aa).

Substrate is bound by residues 20 to 22, Arg-35, 58 to 61, Arg-117, and Arg-154; these read DFN and HLGR. Residues Lys-204, Gly-298, Glu-329, and 358–361 contribute to the ATP site; that span reads GGDS.

It belongs to the phosphoglycerate kinase family. Monomer.

It localises to the cytoplasm. The enzyme catalyses (2R)-3-phosphoglycerate + ATP = (2R)-3-phospho-glyceroyl phosphate + ADP. Its pathway is carbohydrate degradation; glycolysis; pyruvate from D-glyceraldehyde 3-phosphate: step 2/5. The polypeptide is Phosphoglycerate kinase (Bifidobacterium longum (strain NCC 2705)).